The following is a 275-amino-acid chain: NAD kinase (275 aa).

Aspartate 66 functions as the Proton acceptor in the catalytic mechanism. NAD(+) is bound by residues 66 to 67 (DG), 138 to 139 (NE), histidine 168, aspartate 170, 181 to 186 (TAYNLS), and valine 205.

The protein belongs to the NAD kinase family. A divalent metal cation serves as cofactor.

The protein resides in the cytoplasm. The enzyme catalyses NAD(+) + ATP = ADP + NADP(+) + H(+). Involved in the regulation of the intracellular balance of NAD and NADP, and is a key enzyme in the biosynthesis of NADP. Catalyzes specifically the phosphorylation on 2'-hydroxyl of the adenosine moiety of NAD to yield NADP. The chain is NAD kinase from Halorubrum lacusprofundi (strain ATCC 49239 / DSM 5036 / JCM 8891 / ACAM 34).